A 730-amino-acid polypeptide reads, in one-letter code: Tubulin polyglutamylase ttll-5 (730 aa).

A TTL domain is found at 120 to 478 (RLRLTFKMMR…PLLDRKIIDS (359 aa)). ATP-binding positions include 278–281 (SRYL), Lys291, and Asp293. Residues 594–618 (KKNTKNSSGSSKASSSSASASSSSS) form a disordered region. Over residues 600 to 618 (SSGSSKASSSSASASSSSS) the composition is skewed to low complexity.

Belongs to the tubulin--tyrosine ligase family. As to expression, expressed in body wall muscles. Not expressed in sensory neurons.

The enzyme catalyses L-glutamyl-[protein] + L-glutamate + ATP = gamma-L-glutamyl-L-glutamyl-[protein] + ADP + phosphate + H(+). In terms of biological role, polyglutamylase which preferentially modifies alpha-tubulin. Involved in the side-chain initiation step of the polyglutamylation reaction rather than in the elongation step. Together with ttll-4 and ttll-11, required for male mating. Probably by regulating microtubule stability via the glutamylation of tubulin, negatively regulates axon regrowth after injury in PLM neurons. In Caenorhabditis elegans, this protein is Tubulin polyglutamylase ttll-5.